We begin with the raw amino-acid sequence, 217 residues long: Homologous-pairing protein 2 homolog (217 aa).

Residues 84 to 152 adopt a coiled-coil conformation; the sequence is ADLHGLDASI…RLKNIKAATN (69 aa). The DNA-binding stretch occupies residues 118–182; sequence TSALTTPEMQ…WRKRKRMTTE (65 aa).

It belongs to the HOP2 family. As to quaternary structure, interacts with the DNA-binding domain of the nuclear receptors NR3C1/GR, ESR2/ER-beta, THRB and RXRA. Forms a stable heterodimer with MND1. Interacts with PSMC3/TBP1. Phosphorylated by PKA, PKC and MAPK. In terms of tissue distribution, highly expressed in testis and more specifically in spermatocytes. Detected in spleen, ovary and thymus.

Its subcellular location is the nucleus. Its function is as follows. Plays an important role in meiotic recombination. Stimulates DMC1-mediated strand exchange required for pairing homologous chromosomes during meiosis. The complex PSMC3IP/MND1 binds DNA, stimulates the recombinase activity of DMC1 as well as DMC1 D-loop formation from double-strand DNA. This complex stabilizes presynaptic RAD51 and DMC1 filaments formed on single strand DNA to capture double-strand DNA. This complex stimulates both synaptic and presynaptic critical steps in RAD51 and DMC1-promoted homologous pairing. May inhibit HIV-1 viral protein TAT activity and modulate the activity of proteasomes through association with PSMC3. This Mus musculus (Mouse) protein is Homologous-pairing protein 2 homolog (Psmc3ip).